The primary structure comprises 89 residues: Small ribosomal subunit protein uS15 (89 aa).

Belongs to the universal ribosomal protein uS15 family. In terms of assembly, part of the 30S ribosomal subunit. Forms a bridge to the 50S subunit in the 70S ribosome, contacting the 23S rRNA.

Functionally, one of the primary rRNA binding proteins, it binds directly to 16S rRNA where it helps nucleate assembly of the platform of the 30S subunit by binding and bridging several RNA helices of the 16S rRNA. Forms an intersubunit bridge (bridge B4) with the 23S rRNA of the 50S subunit in the ribosome. In Aeromonas hydrophila subsp. hydrophila (strain ATCC 7966 / DSM 30187 / BCRC 13018 / CCUG 14551 / JCM 1027 / KCTC 2358 / NCIMB 9240 / NCTC 8049), this protein is Small ribosomal subunit protein uS15.